Consider the following 295-residue polypeptide: Acetyl-coenzyme A carboxylase carboxyl transferase subunit beta (295 aa).

A disordered region spans residues 1 to 20; the sequence is MSWLSKLMPSGIRTENTPAK. Residues 28–295 enclose the CoA carboxyltransferase N-terminal domain; that stretch reads LWEKCSNCGS…QPHPQDADAA (268 aa). Zn(2+) is bound by residues cysteine 32, cysteine 35, cysteine 51, and cysteine 54. The C4-type zinc-finger motif lies at 32 to 54; that stretch reads CSNCGSALYGPELEENLEVCPKC.

Belongs to the AccD/PCCB family. Acetyl-CoA carboxylase is a heterohexamer composed of biotin carboxyl carrier protein (AccB), biotin carboxylase (AccC) and two subunits each of ACCase subunit alpha (AccA) and ACCase subunit beta (AccD). Zn(2+) is required as a cofactor.

Its subcellular location is the cytoplasm. It catalyses the reaction N(6)-carboxybiotinyl-L-lysyl-[protein] + acetyl-CoA = N(6)-biotinyl-L-lysyl-[protein] + malonyl-CoA. The protein operates within lipid metabolism; malonyl-CoA biosynthesis; malonyl-CoA from acetyl-CoA: step 1/1. Its function is as follows. Component of the acetyl coenzyme A carboxylase (ACC) complex. Biotin carboxylase (BC) catalyzes the carboxylation of biotin on its carrier protein (BCCP) and then the CO(2) group is transferred by the transcarboxylase to acetyl-CoA to form malonyl-CoA. In Xanthomonas oryzae pv. oryzae (strain MAFF 311018), this protein is Acetyl-coenzyme A carboxylase carboxyl transferase subunit beta.